A 314-amino-acid chain; its full sequence is Thymidylate synthase (314 aa).

Residues arginine 21 and 176–177 (RR) contribute to the dUMP site. The active-site Nucleophile is cysteine 196. Residues 216 to 219 (RSAD), asparagine 227, and 257 to 259 (HLY) each bind dUMP. Aspartate 219 is a binding site for (6R)-5,10-methylene-5,6,7,8-tetrahydrofolate. Residue serine 313 participates in (6R)-5,10-methylene-5,6,7,8-tetrahydrofolate binding.

The protein belongs to the thymidylate synthase family. Bacterial-type ThyA subfamily. In terms of assembly, homodimer.

The protein resides in the cytoplasm. It catalyses the reaction dUMP + (6R)-5,10-methylene-5,6,7,8-tetrahydrofolate = 7,8-dihydrofolate + dTMP. It functions in the pathway pyrimidine metabolism; dTTP biosynthesis. Its function is as follows. Catalyzes the reductive methylation of 2'-deoxyuridine-5'-monophosphate (dUMP) to 2'-deoxythymidine-5'-monophosphate (dTMP) while utilizing 5,10-methylenetetrahydrofolate (mTHF) as the methyl donor and reductant in the reaction, yielding dihydrofolate (DHF) as a by-product. This enzymatic reaction provides an intracellular de novo source of dTMP, an essential precursor for DNA biosynthesis. This chain is Thymidylate synthase, found in Listeria monocytogenes serovar 1/2a (strain ATCC BAA-679 / EGD-e).